An 849-amino-acid polypeptide reads, in one-letter code: Villin-1 (849 aa).

Gelsolin-like repeat units lie at residues isoleucine 30–leucine 107, arginine 147–lysine 213, valine 262–phenylalanine 335, glutamine 405–phenylalanine 475, and alanine 527–leucine 566. Residues glutamate 739–leucine 849 are disordered. 2 stretches are compositionally biased toward low complexity: residues lysine 747–threonine 782 and proline 791–serine 823.

It belongs to the villin/gelsolin family.

The protein localises to the cytoplasm. It localises to the cytoskeleton. Ca(2+)-independent actin-binding protein. Binds actin microfilaments (MFs). Involved in actin filament bundling, severing and capping. Caps the barbed end of actin filaments and protects them from disassembly. Promotes VLN3-mediated MF severing. In Oryza sativa subsp. indica (Rice), this protein is Villin-1.